A 506-amino-acid polypeptide reads, in one-letter code: Sodium transporter HKT1 (506 aa).

Over 1-19 (MDRVVAKIAKIRSQLTKLR) the chain is Cytoplasmic. The chain crosses the membrane as a helical span at residues 20–40 (SLFFLYFIYFLFFSFLGFLAL). The Extracellular segment spans residues 41 to 81 (KITKPRTTSRPHDFDLFFTSVSAITVSSMSTVDMEVFSNTQ). Residues 82–102 (LIFLTILMFLGGEIFTSFLNL) form a helical membrane-spanning segment. Residues 103-159 (YVSYFTKFVFPHNKIRHILGSYNSDSSIEDRCDVETVTDYREGLIKIDERASKCLYS) lie on the Cytoplasmic side of the membrane. A helical transmembrane segment spans residues 160 to 180 (VVLSYHLVTNLVGSVLLLVYV). The Extracellular portion of the chain corresponds to 181-232 (NFVKTARDVLSSKEISPLTFSVFTTVSTFANCGFVPTNENMIIFRKNSGLIW). A helical membrane pass occupies residues 233-253 (LLIPQVLMGNTLFPCFLVLLI). The Cytoplasmic segment spans residues 254 to 286 (WGLYKITKRDEYGYILKNHNKMGYSHLLSVRLC). Residues 287 to 307 (VLLGVTVLGFLIIQLLFFCAF) form a helical membrane-spanning segment. At 308-348 (EWTSESLEGMSSYEKLVGSLFQVVNSRHTGETIVDLSTLSP) the chain is on the extracellular side. Residues 349-369 (AILVLFILMMYLPPYTLFMPL) traverse the membrane as a helical segment. Residues 370–392 (TEQKTIEKEGGDDDSENGKKVKK) are Cytoplasmic-facing. The chain crosses the membrane as a helical span at residues 393–413 (SGLIVSQLSFLTICIFLISIT). At 414–465 (ERQNLQRDPINFNVLNITLEVISAYGNVGFTTGYSCERRVDISDGGCKDASY) the chain is on the extracellular side. N-linked (GlcNAc...) asparagine glycosylation occurs at asparagine 429. A helical membrane pass occupies residues 466-486 (GFAGRWSPMGKFVLIIVMFYG). The Cytoplasmic portion of the chain corresponds to 487-506 (RFKQFTAKSGRAWILYPSSS).

It belongs to the TrkH potassium transport family. HKT (TC 2.A.38.3) subfamily. N-glycosylated. Not essential for functional expression and membrane targeting. In terms of tissue distribution, highly expressed in roots. Expressed in flowers, leaves and stems. Expressed in the vascular tissues of every organs. In roots, leaves and flower peduncles, it is only expressed in the phloem tissues. Not expressed in root peripheral cells.

It is found in the cell membrane. It catalyses the reaction Na(+)(in) = Na(+)(out). Sodium transporter protein, which plays a central role in plant tolerance to salt. Upon prolongated exposure to high concentrations, Na(+) translocates from the roots to the transpiring leaves where it can increase to toxic level. Involved in Na(+) recirculation from shoots to roots, probably by mediating Na(+) loading into the phloem sap in shoots and unloading in roots, thereby removing large amounts of Na(+) from the shoot. Does not transport K(+) but regulates K(+) nutrient status via its ability to facilitate Na(+) homeostasis. Probably not involved in root uptake of Na(+). The polypeptide is Sodium transporter HKT1 (HKT1) (Arabidopsis thaliana (Mouse-ear cress)).